Reading from the N-terminus, the 158-residue chain is Large ribosomal subunit protein uL11 (158 aa).

It belongs to the universal ribosomal protein uL11 family. In terms of assembly, part of the ribosomal stalk of the 50S ribosomal subunit. Interacts with L10 and the large rRNA to form the base of the stalk. L10 forms an elongated spine to which L12 dimers bind in a sequential fashion forming a multimeric L10(L12)X complex.

Functionally, forms part of the ribosomal stalk which helps the ribosome interact with GTP-bound translation factors. The sequence is that of Large ribosomal subunit protein uL11 from Methanocella arvoryzae (strain DSM 22066 / NBRC 105507 / MRE50).